A 184-amino-acid chain; its full sequence is ATP-dependent protease subunit HslV (184 aa).

Residue T12 is part of the active site. Na(+)-binding residues include G167, C170, and T173.

The protein belongs to the peptidase T1B family. HslV subfamily. A double ring-shaped homohexamer of HslV is capped on each side by a ring-shaped HslU homohexamer. The assembly of the HslU/HslV complex is dependent on binding of ATP.

The protein resides in the cytoplasm. The catalysed reaction is ATP-dependent cleavage of peptide bonds with broad specificity.. With respect to regulation, allosterically activated by HslU binding. Protease subunit of a proteasome-like degradation complex believed to be a general protein degrading machinery. The sequence is that of ATP-dependent protease subunit HslV from Wolbachia sp. subsp. Drosophila simulans (strain wRi).